The chain runs to 318 residues: GPN-loop GTPase 2 (318 aa).

29-34 (GSGKST) serves as a coordination point for GTP. The Gly-Pro-Asn (GPN)-loop; involved in dimer interface signature appears at 85 to 87 (GPN). 187 to 190 (SKMD) provides a ligand contact to GTP.

The protein belongs to the GPN-loop GTPase family. As to quaternary structure, heterodimers with gpn1 or gpn3. Binds to RNA polymerase II (RNAPII).

In terms of biological role, small GTPase required for proper localization of RNA polymerase II and III (RNAPII and RNAPIII). May act at an RNAP assembly step prior to nuclear import. In Xenopus laevis (African clawed frog), this protein is GPN-loop GTPase 2.